A 333-amino-acid polypeptide reads, in one-letter code: Probable pyridoxal reductase 2 (333 aa).

Residue Tyr-52 is the Proton donor of the active site.

Belongs to the aldo/keto reductase family.

It localises to the cytoplasm. The enzyme catalyses pyridoxine + NADP(+) = pyridoxal + NADPH + H(+). Functionally, catalyzes the reduction of pyridoxal (PL) with NADPH and oxidation of pyridoxine (PN) with NADP(+). This is Probable pyridoxal reductase 2 from Schizosaccharomyces pombe (strain 972 / ATCC 24843) (Fission yeast).